The sequence spans 460 residues: ATP synthase subunit beta (460 aa).

150 to 157 (GGAGVGKT) is an ATP binding site.

The protein belongs to the ATPase alpha/beta chains family. In terms of assembly, F-type ATPases have 2 components, CF(1) - the catalytic core - and CF(0) - the membrane proton channel. CF(1) has five subunits: alpha(3), beta(3), gamma(1), delta(1), epsilon(1). CF(0) has three main subunits: a(1), b(2) and c(9-12). The alpha and beta chains form an alternating ring which encloses part of the gamma chain. CF(1) is attached to CF(0) by a central stalk formed by the gamma and epsilon chains, while a peripheral stalk is formed by the delta and b chains.

The protein resides in the cell inner membrane. The catalysed reaction is ATP + H2O + 4 H(+)(in) = ADP + phosphate + 5 H(+)(out). Functionally, produces ATP from ADP in the presence of a proton gradient across the membrane. The catalytic sites are hosted primarily by the beta subunits. The protein is ATP synthase subunit beta of Erwinia tasmaniensis (strain DSM 17950 / CFBP 7177 / CIP 109463 / NCPPB 4357 / Et1/99).